Reading from the N-terminus, the 475-residue chain is Argininosuccinate lyase 1 (475 aa).

This sequence belongs to the lyase 1 family. Argininosuccinate lyase subfamily.

It is found in the cytoplasm. It catalyses the reaction 2-(N(omega)-L-arginino)succinate = fumarate + L-arginine. It participates in amino-acid biosynthesis; L-arginine biosynthesis; L-arginine from L-ornithine and carbamoyl phosphate: step 3/3. The polypeptide is Argininosuccinate lyase 1 (Pseudomonas fluorescens (strain Pf0-1)).